A 55-amino-acid chain; its full sequence is Large ribosomal subunit protein bL33 (55 aa).

It belongs to the bacterial ribosomal protein bL33 family.

The chain is Large ribosomal subunit protein bL33 (rpmG) from Nitrobacter hamburgensis (strain DSM 10229 / NCIMB 13809 / X14).